A 483-amino-acid polypeptide reads, in one-letter code: Protein disulfide-isomerase 5-3 (483 aa).

3 N-linked (GlcNAc...) asparagine glycosylation sites follow: asparagine 53, asparagine 74, and asparagine 99. Positions glutamate 133–alanine 263 constitute a Thioredoxin domain. Catalysis depends on cysteine 170, which acts as the Nucleophile. N-linked (GlcNAc...) asparagine glycosylation is found at asparagine 279, asparagine 326, and asparagine 376. The helical transmembrane segment at phenylalanine 442–isoleucine 462 threads the bilayer.

This sequence belongs to the protein disulfide isomerase family. In terms of tissue distribution, widely expressed.

Its subcellular location is the membrane. Functionally, acts as a protein-folding catalyst that interacts with nascent polypeptides to catalyze the formation, isomerization, and reduction or oxidation of disulfide bonds. The protein is Protein disulfide-isomerase 5-3 (PDIL5-3) of Arabidopsis thaliana (Mouse-ear cress).